Here is a 215-residue protein sequence, read N- to C-terminus: MKKVLASATILSLMLVGCSNGGNDESSHKDDSSKTEQKDKSSSQHDSKKDSKRNDTNNKQDNQENKSNKEQTSNQNSNAGEQRTSERPTTNSNGISSDNQNKQQQSVQDNQNKYVAPYQSENATRVARYLSPFEGDRSQALQQLPNFETALSIAKNEANMYGSENKSYNDYSIEQTEDGFRYVFSFKDPSKSNTYSIVTLNRQGQPTVVDPNFQP.

The signal sequence occupies residues 1–17 (MKKVLASATILSLMLVG). The segment at 17–110 (GCSNGGNDES…NKQQQSVQDN (94 aa)) is disordered. Cysteine 18 carries N-palmitoyl cysteine lipidation. Residue cysteine 18 is the site of S-diacylglycerol cysteine attachment. Residues 25-69 (ESSHKDDSSKTEQKDKSSSQHDSKKDSKRNDTNNKQDNQENKSNK) show a composition bias toward basic and acidic residues. The span at 70 to 95 (EQTSNQNSNAGEQRTSERPTTNSNGI) shows a compositional bias: polar residues. Residues 96 to 110 (SSDNQNKQQQSVQDN) are compositionally biased toward low complexity.

The protein resides in the cell membrane. This is an uncharacterized protein from Staphylococcus epidermidis (strain ATCC 12228 / FDA PCI 1200).